The chain runs to 904 residues: Translation initiation factor IF-2 (904 aa).

Disordered regions lie at residues 103–122 (YVKS…PDEE), 137–252 (NLEE…MVAG), and 267–315 (HLSA…FERP). A compositionally biased stretch (basic and acidic residues) spans 137-177 (NLEEQQRLAESDRVRDEAIQRKREEEQAAKDRAEAERKAAE). 2 stretches are compositionally biased toward low complexity: residues 178–230 (EAAA…AAPA) and 280–293 (RGKP…SSSR). In terms of domain architecture, tr-type G spans 403–572 (SRPPVVTIMG…SLQAEVLELK (170 aa)). The G1 stretch occupies residues 412-419 (GHVDHGKT). Residue 412 to 419 (GHVDHGKT) participates in GTP binding. The segment at 437–441 (GITQH) is G2. The segment at 458–461 (DTPG) is G3. GTP is bound by residues 458–462 (DTPGH) and 512–515 (NKID). The G4 stretch occupies residues 512 to 515 (NKID). Residues 548-550 (SAK) are G5.

It belongs to the TRAFAC class translation factor GTPase superfamily. Classic translation factor GTPase family. IF-2 subfamily.

It localises to the cytoplasm. Its function is as follows. One of the essential components for the initiation of protein synthesis. Protects formylmethionyl-tRNA from spontaneous hydrolysis and promotes its binding to the 30S ribosomal subunits. Also involved in the hydrolysis of GTP during the formation of the 70S ribosomal complex. The protein is Translation initiation factor IF-2 of Xanthomonas euvesicatoria pv. vesicatoria (strain 85-10) (Xanthomonas campestris pv. vesicatoria).